The chain runs to 170 residues: Metalloproteinase inhibitor 4 (170 aa).

The NTR domain maps to 1–105 (ISSEKVVPAS…SLNHHYHLNC (105 aa)). Involved in metalloproteinase-binding regions lie at residues 6-9 (VVPA) and 48-49 (SS). 3 disulfides stabilise this stretch: Cys107–Cys154, Cys112–Cys117, and Cys125–Cys146.

Belongs to the protease inhibitor I35 (TIMP) family.

The protein resides in the secreted. In terms of biological role, complexes with metalloproteinases (such as collagenases) and irreversibly inactivates them by binding to their catalytic zinc cofactor. In Oryctolagus cuniculus (Rabbit), this protein is Metalloproteinase inhibitor 4 (TIMP4).